The chain runs to 100 residues: ATP synthase subunit c (100 aa).

The next 2 membrane-spanning stretches (helical) occupy residues 27–47 and 72–92; these read SVIA…IGMG and FIAL…TLIV.

It belongs to the ATPase C chain family. In terms of assembly, F-type ATPases have 2 components, F(1) - the catalytic core - and F(0) - the membrane proton channel. F(1) has five subunits: alpha(3), beta(3), gamma(1), delta(1), epsilon(1). F(0) has three main subunits: a(1), b(2) and c(10-14). The alpha and beta chains form an alternating ring which encloses part of the gamma chain. F(1) is attached to F(0) by a central stalk formed by the gamma and epsilon chains, while a peripheral stalk is formed by the delta and b chains.

Its subcellular location is the cell inner membrane. Its function is as follows. F(1)F(0) ATP synthase produces ATP from ADP in the presence of a proton or sodium gradient. F-type ATPases consist of two structural domains, F(1) containing the extramembraneous catalytic core and F(0) containing the membrane proton channel, linked together by a central stalk and a peripheral stalk. During catalysis, ATP synthesis in the catalytic domain of F(1) is coupled via a rotary mechanism of the central stalk subunits to proton translocation. Functionally, key component of the F(0) channel; it plays a direct role in translocation across the membrane. A homomeric c-ring of between 10-14 subunits forms the central stalk rotor element with the F(1) delta and epsilon subunits. This chain is ATP synthase subunit c, found in Campylobacter concisus (strain 13826).